We begin with the raw amino-acid sequence, 79 residues long: Exodeoxyribonuclease 7 small subunit (79 aa).

Belongs to the XseB family. Heterooligomer composed of large and small subunits.

The protein localises to the cytoplasm. It catalyses the reaction Exonucleolytic cleavage in either 5'- to 3'- or 3'- to 5'-direction to yield nucleoside 5'-phosphates.. Its function is as follows. Bidirectionally degrades single-stranded DNA into large acid-insoluble oligonucleotides, which are then degraded further into small acid-soluble oligonucleotides. The chain is Exodeoxyribonuclease 7 small subunit from Lactococcus lactis subsp. cremoris (strain SK11).